The primary structure comprises 390 residues: NADH-dependent butanol dehydrogenase B (390 aa).

It belongs to the iron-containing alcohol dehydrogenase family. Homodimer.

The protein operates within alcohol metabolism; butanol biosynthesis. The protein is NADH-dependent butanol dehydrogenase B (bdhB) of Clostridium acetobutylicum (strain ATCC 824 / DSM 792 / JCM 1419 / IAM 19013 / LMG 5710 / NBRC 13948 / NRRL B-527 / VKM B-1787 / 2291 / W).